The following is a 273-amino-acid chain: Epidermal growth factor-like protein 7 (273 aa).

The first 23 residues, 1–23 (MRGSQEVLLMWLLVLAVGGTEHA), serve as a signal peptide directing secretion. In terms of domain architecture, EMI spans 27–104 (GRRVCAVRAH…TSGLPGACGA (78 aa)). 9 disulfides stabilise this stretch: C31/C89, C56/C62, C88/C102, C107/C117, C111/C123, C125/C134, C141/C152, C148/C161, and C163/C176. Residues 103 to 135 (GAAICQPPCRNGGSCVQPGRCRCPAGWRGDTCQ) form the EGF-like 1 domain. A Cell attachment site motif is present at residues 130–132 (RGD). One can recognise an EGF-like 2; calcium-binding domain in the interval 137 to 177 (DVDECSARRGGCPQRCVNTAGSYWCQCWEGHSLSADGTLCV). Positions 192 to 219 (VDSAMKEEVQRLQSRVDLLEEKLQLVLA) form a coiled coil.

Interacts with ITGAV/ITGB3 in an RGD-dependent manner, increasing endothelial cell's motility.

Its subcellular location is the secreted. It localises to the extracellular space. Regulates vascular tubulogenesis in vivo. Inhibits platelet-derived growth factor (PDGF)-BB-induced smooth muscle cell migration and promotes endothelial cell adhesion to the extracellular matrix and angiogenesis. The sequence is that of Epidermal growth factor-like protein 7 (EGFL7) from Homo sapiens (Human).